A 308-amino-acid polypeptide reads, in one-letter code: tRNA dimethylallyltransferase (308 aa).

Gly-9–Thr-16 lines the ATP pocket. Position 11-16 (Thr-11–Thr-16) interacts with substrate. 2 interaction with substrate tRNA regions span residues Asp-34–Gln-37 and Gln-158–Arg-162.

It belongs to the IPP transferase family. Monomer. It depends on Mg(2+) as a cofactor.

It catalyses the reaction adenosine(37) in tRNA + dimethylallyl diphosphate = N(6)-dimethylallyladenosine(37) in tRNA + diphosphate. Functionally, catalyzes the transfer of a dimethylallyl group onto the adenine at position 37 in tRNAs that read codons beginning with uridine, leading to the formation of N6-(dimethylallyl)adenosine (i(6)A). The sequence is that of tRNA dimethylallyltransferase from Maricaulis maris (strain MCS10) (Caulobacter maris).